The sequence spans 453 residues: GTPase Der (453 aa).

2 EngA-type G domains span residues 4–169 (PIVA…PTQG) and 177–352 (TKIA…NEYQ). Residues 10 to 17 (GRPNVGKS), 57 to 61 (DTGGL), 120 to 123 (NKCE), 183 to 190 (GRPNVGKS), 230 to 234 (DTAGI), and 295 to 298 (NKWD) each bind GTP. One can recognise a KH-like domain in the interval 353-438 (RRVTTSVINE…PIRLLWRGKK (86 aa)).

The protein belongs to the TRAFAC class TrmE-Era-EngA-EngB-Septin-like GTPase superfamily. EngA (Der) GTPase family. Associates with the 50S ribosomal subunit.

In terms of biological role, GTPase that plays an essential role in the late steps of ribosome biogenesis. The sequence is that of GTPase Der from Trichodesmium erythraeum (strain IMS101).